Consider the following 355-residue polypeptide: Serum paraoxonase/arylesterase 1 (355 aa).

A disulfide bridge links Cys-42 with Cys-353. Residues Glu-53 and Asp-54 each coordinate Ca(2+). The Proton acceptor role is filled by His-115. Ca(2+) is bound by residues Ile-117, Asn-168, Asp-169, and Asn-224. Residue Asn-253 is glycosylated (N-linked (GlcNAc...) asparagine). Residues Asp-269 and Asn-270 each coordinate Ca(2+). Residues Asn-270 and Asn-324 are each glycosylated (N-linked (GlcNAc...) asparagine).

Belongs to the paraoxonase family. In terms of assembly, homodimer. Interacts with CLU. Ca(2+) serves as cofactor. Post-translationally, the signal sequence is not cleaved. In terms of tissue distribution, plasma, liver, kidney, heart, brain, small intestine and lung. In the plasma, associated with HDL.

The protein resides in the secreted. The protein localises to the extracellular space. It carries out the reaction a phenyl acetate + H2O = a phenol + acetate + H(+). The enzyme catalyses An aryl dialkyl phosphate + H2O = dialkyl phosphate + an aryl alcohol.. It catalyses the reaction an N-acyl-L-homoserine lactone + H2O = an N-acyl-L-homoserine + H(+). Functionally, hydrolyzes the toxic metabolites of a variety of organophosphorus insecticides. Capable of hydrolyzing a broad spectrum of organophosphate substrates and lactones, and a number of aromatic carboxylic acid esters. Mediates an enzymatic protection of low density lipoproteins against oxidative modification. This Mus musculus (Mouse) protein is Serum paraoxonase/arylesterase 1 (Pon1).